Here is a 29-residue protein sequence, read N- to C-terminus: Cytochrome c oxidase subunit 7A1, mitochondrial (29 aa).

A compositionally biased stretch (basic and acidic residues) spans 1-13; the sequence is LENRVAEKQKLFQ. Positions 1-29 are disordered; sequence LENRVAEKQKLFQEDNGLPVHLKGGATDN.

This sequence belongs to the cytochrome c oxidase VIIa family. In terms of assembly, component of the complex IV (CIV, cytochrome c oxidase), a multisubunit enzyme composed of 14 subunits. The complex is composed of a catalytic core of 3 subunits MT-CO1, MT-CO2 and MT-CO3, encoded in the mitochondrial DNA, and 11 supernumerary subunits COX4I1 (or COX4I2), COX5A, COX5B, COX6A2 (or COX6A1), COX6B1 (or COX6B2), COX6C, COX7A1 (or COX7A2), COX7B, COX7C, COX8B and NDUFA4, which are encoded in the nuclear genome. The complex exists as a monomer or a dimer and forms supercomplexes (SCs) in the inner mitochondrial membrane with NADH-ubiquinone oxidoreductase (complex I, CI) and ubiquinol-cytochrome c oxidoreductase (cytochrome b-c1 complex, complex III, CIII), resulting in different assemblies (supercomplex SCI(1)III(2)IV(1) and megacomplex MCI(2)III(2)IV(2)).

It localises to the mitochondrion inner membrane. It functions in the pathway energy metabolism; oxidative phosphorylation. Component of the mitochondrial respiratory complex IV (CIV, also named cytochrome c oxidase complex), the last enzyme in the mitochondrial electron transport chain which drives oxidative phosphorylation. The CIV complex is the component of the respiratory chain that catalyzes the reduction of oxygen to water. Acts as an assembly factor that specifically drives the homodimerization of CIV complexes, mediating the formation of mitochondrial respiratory supercomplexes (respirasomes) containing two CIV: supercomplxes with two molecules of CIV show improved activity. Despite being highly expressed in brown adipose tissue, not required for thermogenesis. In Ovis aries (Sheep), this protein is Cytochrome c oxidase subunit 7A1, mitochondrial (COX7A1).